A 120-amino-acid polypeptide reads, in one-letter code: Non-specific lipid-transfer protein (120 aa).

Positions Met-1–Gly-26 are cleaved as a signal peptide. 3 disulfides stabilise this stretch: Cys-40–Cys-56, Cys-57–Cys-102, and Cys-77–Cys-116.

This sequence belongs to the plant LTP family.

Functionally, plant non-specific lipid-transfer proteins transfer phospholipids as well as galactolipids across membranes. May play a role in wax or cutin deposition in the cell walls of expanding epidermal cells and certain secretory tissues. The protein is Non-specific lipid-transfer protein of Gossypium hirsutum (Upland cotton).